The chain runs to 269 residues: 4-hydroxy-tetrahydrodipicolinate reductase (269 aa).

Residues 10 to 15 (GANGRM), E36, 99 to 101 (GTT), and 123 to 126 (AANF) contribute to the NAD(+) site. H156 serves as the catalytic Proton donor/acceptor. A (S)-2,3,4,5-tetrahydrodipicolinate-binding site is contributed by H157. Catalysis depends on K160, which acts as the Proton donor. Residue 166–167 (GT) coordinates (S)-2,3,4,5-tetrahydrodipicolinate.

This sequence belongs to the DapB family.

The protein resides in the cytoplasm. It catalyses the reaction (S)-2,3,4,5-tetrahydrodipicolinate + NAD(+) + H2O = (2S,4S)-4-hydroxy-2,3,4,5-tetrahydrodipicolinate + NADH + H(+). The enzyme catalyses (S)-2,3,4,5-tetrahydrodipicolinate + NADP(+) + H2O = (2S,4S)-4-hydroxy-2,3,4,5-tetrahydrodipicolinate + NADPH + H(+). The protein operates within amino-acid biosynthesis; L-lysine biosynthesis via DAP pathway; (S)-tetrahydrodipicolinate from L-aspartate: step 4/4. Catalyzes the conversion of 4-hydroxy-tetrahydrodipicolinate (HTPA) to tetrahydrodipicolinate. The polypeptide is 4-hydroxy-tetrahydrodipicolinate reductase (Neisseria gonorrhoeae (strain ATCC 700825 / FA 1090)).